The primary structure comprises 384 residues: Methylthioribose-1-phosphate isomerase (384 aa).

Catalysis depends on aspartate 255, which acts as the Proton donor.

It belongs to the eIF-2B alpha/beta/delta subunits family. MtnA subfamily.

The protein resides in the cytoplasm. It is found in the nucleus. It catalyses the reaction 5-(methylsulfanyl)-alpha-D-ribose 1-phosphate = 5-(methylsulfanyl)-D-ribulose 1-phosphate. It functions in the pathway amino-acid biosynthesis; L-methionine biosynthesis via salvage pathway; L-methionine from S-methyl-5-thio-alpha-D-ribose 1-phosphate: step 1/6. Functionally, catalyzes the interconversion of methylthioribose-1-phosphate (MTR-1-P) into methylthioribulose-1-phosphate (MTRu-1-P). The polypeptide is Methylthioribose-1-phosphate isomerase (mri1) (Talaromyces marneffei (strain ATCC 18224 / CBS 334.59 / QM 7333) (Penicillium marneffei)).